The primary structure comprises 558 residues: Arginine--tRNA ligase (558 aa).

A 'HIGH' region motif is present at residues 116–126 (ANPNGPLHVGH).

The protein belongs to the class-I aminoacyl-tRNA synthetase family.

Its subcellular location is the cytoplasm. The enzyme catalyses tRNA(Arg) + L-arginine + ATP = L-arginyl-tRNA(Arg) + AMP + diphosphate. This chain is Arginine--tRNA ligase, found in Methanocorpusculum labreanum (strain ATCC 43576 / DSM 4855 / Z).